We begin with the raw amino-acid sequence, 338 residues long: Lipoate-protein ligase A (338 aa).

The BPL/LPL catalytic domain maps to 29-216 (PATQRVLFLW…AFFAHYGERV (188 aa)). Residues Arg-71, 76–79 (GAVF), and Lys-134 each bind ATP. Lys-134 serves as a coordination point for (R)-lipoate.

The protein belongs to the LplA family. As to quaternary structure, monomer.

The protein resides in the cytoplasm. It catalyses the reaction L-lysyl-[lipoyl-carrier protein] + (R)-lipoate + ATP = N(6)-[(R)-lipoyl]-L-lysyl-[lipoyl-carrier protein] + AMP + diphosphate + H(+). It functions in the pathway protein modification; protein lipoylation via exogenous pathway; protein N(6)-(lipoyl)lysine from lipoate: step 1/2. It participates in protein modification; protein lipoylation via exogenous pathway; protein N(6)-(lipoyl)lysine from lipoate: step 2/2. Catalyzes both the ATP-dependent activation of exogenously supplied lipoate to lipoyl-AMP and the transfer of the activated lipoyl onto the lipoyl domains of lipoate-dependent enzymes. This is Lipoate-protein ligase A from Escherichia coli O139:H28 (strain E24377A / ETEC).